We begin with the raw amino-acid sequence, 641 residues long: Chaperone protein DnaK (641 aa).

Position 199 is a phosphothreonine; by autocatalysis (threonine 199). Positions 603-613 (YTQQGGTAGSE) are enriched in polar residues. The tract at residues 603–641 (YTQQGGTAGSETHSHEKAGGSGGDDVVDAEFEEVRDDKR) is disordered. A compositionally biased stretch (acidic residues) spans 627–641 (DVVDAEFEEVRDDKR).

It belongs to the heat shock protein 70 family.

In terms of biological role, acts as a chaperone. The protein is Chaperone protein DnaK of Methylococcus capsulatus (strain ATCC 33009 / NCIMB 11132 / Bath).